Reading from the N-terminus, the 417-residue chain is 3-ketoacyl-CoA thiolase, peroxisomal (417 aa).

A peroxisome-targeting transit peptide spans 1–15; it reads MSQRLQSIKDHLVES. Residues 1–15 form a PTS2-type peroxisomal targeting signal region; that stretch reads MSQRLQSIKDHLVES. Cysteine 125 functions as the Acyl-thioester intermediate in the catalytic mechanism. Active-site proton acceptor residues include histidine 375 and cysteine 403.

This sequence belongs to the thiolase-like superfamily. Thiolase family. As to quaternary structure, homodimer. Interacts (via PTS2-type peroxisomal targeting signal region) with PEX7; leading to its translocation into peroxisomes.

The protein resides in the peroxisome. Its subcellular location is the mitochondrion intermembrane space. It catalyses the reaction an acyl-CoA + acetyl-CoA = a 3-oxoacyl-CoA + CoA. Its pathway is lipid metabolism; fatty acid metabolism. Functionally, responsible for the thiolytic cleavage of straight chain 3-keto fatty acyl-CoAs (3-oxoacyl-CoAs). This Saccharomyces cerevisiae (strain ATCC 204508 / S288c) (Baker's yeast) protein is 3-ketoacyl-CoA thiolase, peroxisomal (POT1).